Reading from the N-terminus, the 299-residue chain is Lipoyl synthase 2 (299 aa).

Cys45, Cys50, Cys56, Cys71, Cys75, Cys78, and Ser295 together coordinate [4Fe-4S] cluster. Residues 57–284 (YASGTATFLL…KSFCSKLGFK (228 aa)) enclose the Radical SAM core domain.

This sequence belongs to the radical SAM superfamily. Lipoyl synthase family. The cofactor is [4Fe-4S] cluster.

The protein localises to the cytoplasm. It catalyses the reaction [[Fe-S] cluster scaffold protein carrying a second [4Fe-4S](2+) cluster] + N(6)-octanoyl-L-lysyl-[protein] + 2 oxidized [2Fe-2S]-[ferredoxin] + 2 S-adenosyl-L-methionine + 4 H(+) = [[Fe-S] cluster scaffold protein] + N(6)-[(R)-dihydrolipoyl]-L-lysyl-[protein] + 4 Fe(3+) + 2 hydrogen sulfide + 2 5'-deoxyadenosine + 2 L-methionine + 2 reduced [2Fe-2S]-[ferredoxin]. The protein operates within protein modification; protein lipoylation via endogenous pathway; protein N(6)-(lipoyl)lysine from octanoyl-[acyl-carrier-protein]: step 2/2. Catalyzes the radical-mediated insertion of two sulfur atoms into the C-6 and C-8 positions of the octanoyl moiety bound to the lipoyl domains of lipoate-dependent enzymes, thereby converting the octanoylated domains into lipoylated derivatives. The sequence is that of Lipoyl synthase 2 from Prochlorococcus marinus subsp. pastoris (strain CCMP1986 / NIES-2087 / MED4).